A 186-amino-acid polypeptide reads, in one-letter code: Ribosome-recycling factor (186 aa).

Residues 135 to 156 form a disordered region; that stretch reads DANDEVKKLQKDKAVSEDEGKK.

The protein belongs to the RRF family.

It is found in the cytoplasm. Responsible for the release of ribosomes from messenger RNA at the termination of protein biosynthesis. May increase the efficiency of translation by recycling ribosomes from one round of translation to another. This chain is Ribosome-recycling factor, found in Bdellovibrio bacteriovorus (strain ATCC 15356 / DSM 50701 / NCIMB 9529 / HD100).